The following is a 413-amino-acid chain: MPISIPLNATLQYSSPSSSSSSSSLVPSSPLFSPIPSTTVSLTGIRQRCLRMVTSCVSNAQKSVLNGATDSVSVVGREQIRLGLPSKGRMAADSLDLLKDCQLFVKQVNPRQYVAQIPQLPNTEVWFQRPKDIVRKLLSGDLDLGIVGLDIVGEFGQGNEDLIIVHEALNFGDCHLSLAIPNYGIFENIKSLKELAQMPQWTEERPLRVATGFTYLGPKFMKDNGIKHVTFSTADGALEAAPAMGIADAILDLVSSGTTLKENNLKEIEGGVVLESQAALVASRRALTERKGALETVHEILERLEAHLKANGQFTVVANMRGTDAEEVAERVKTQPSLSGLQGPTISPVYCKRDGKVTIEYYAIVICVPKKALYESVQQLRAVGGSGVLVSPVTYIFHEETPRWSQLLSNLGL.

Residues 1–57 (MPISIPLNATLQYSSPSSSSSSSSLVPSSPLFSPIPSTTVSLTGIRQRCLRMVTSCV) constitute a chloroplast transit peptide.

This sequence belongs to the ATP phosphoribosyltransferase family. Long subfamily. It depends on Mg(2+) as a cofactor.

The protein resides in the plastid. The protein localises to the chloroplast. It catalyses the reaction 1-(5-phospho-beta-D-ribosyl)-ATP + diphosphate = 5-phospho-alpha-D-ribose 1-diphosphate + ATP. Its pathway is amino-acid biosynthesis; L-histidine biosynthesis; L-histidine from 5-phospho-alpha-D-ribose 1-diphosphate: step 1/9. Feedback inhibited by L-histidine. Catalyzes the condensation of ATP and 5-phosphoribose 1-diphosphate to form N'-(5'-phosphoribosyl)-ATP (PR-ATP). In Arabidopsis thaliana (Mouse-ear cress), this protein is ATP phosphoribosyltransferase 2, chloroplastic (HISN1B).